A 257-amino-acid chain; its full sequence is Flavodoxin/ferredoxin--NADP reductase (257 aa).

One can recognise an FAD-binding FR-type domain in the interval 2–110 (NPWINANVLK…EKSFGFFTLD (109 aa)). Residues 59-62 (RAYS), Y75, 83-85 (KLS), and T125 each bind FAD. Residues 152–153 (VR), 182–183 (SR), R193, 223–225 (NPA), and D229 each bind NADP(+). 256-257 (YW) serves as a coordination point for FAD.

Belongs to the ferredoxin--NADP reductase type 1 family. It depends on FAD as a cofactor.

Its subcellular location is the cytoplasm. The enzyme catalyses 2 reduced [2Fe-2S]-[ferredoxin] + NADP(+) + H(+) = 2 oxidized [2Fe-2S]-[ferredoxin] + NADPH. The catalysed reaction is reduced [flavodoxin] + NADP(+) = oxidized [flavodoxin] + NADPH + 2 H(+). Functionally, transports electrons between flavodoxin or ferredoxin and NADPH. The protein is Flavodoxin/ferredoxin--NADP reductase (fpr) of Buchnera aphidicola subsp. Schizaphis graminum (strain Sg).